The primary structure comprises 696 residues: Polyphosphate kinase (696 aa).

Asn45 is a binding site for ATP. Residues Arg373 and Arg403 each contribute to the Mg(2+) site. The region spanning 428-462 (PGLKIHSKLLMISRREGDDIIRYAHIGTGNFHEKT) is the PLD phosphodiesterase domain. His433 functions as the Phosphohistidine intermediate in the catalytic mechanism. ATP contacts are provided by Tyr466, Arg562, and His590.

Belongs to the polyphosphate kinase 1 (PPK1) family. Mg(2+) is required as a cofactor. An intermediate of this reaction is the autophosphorylated ppk in which a phosphate is covalently linked to a histidine residue through a N-P bond.

It carries out the reaction [phosphate](n) + ATP = [phosphate](n+1) + ADP. Its function is as follows. Catalyzes the reversible transfer of the terminal phosphate of ATP to form a long-chain polyphosphate (polyP). The chain is Polyphosphate kinase from Vibrio parahaemolyticus serotype O3:K6 (strain RIMD 2210633).